Consider the following 94-residue polypeptide: Integration host factor subunit beta (94 aa).

The protein belongs to the bacterial histone-like protein family. Heterodimer of an alpha and a beta chain.

Its function is as follows. This protein is one of the two subunits of integration host factor, a specific DNA-binding protein that functions in genetic recombination as well as in transcriptional and translational control. The protein is Integration host factor subunit beta (ihfB) of Serratia marcescens.